The primary structure comprises 473 residues: tRNA modification GTPase MnmE (473 aa).

(6S)-5-formyl-5,6,7,8-tetrahydrofolate-binding residues include arginine 28, glutamate 93, and arginine 132. One can recognise a TrmE-type G domain in the interval 228–394 (GVATVLVGSP…LKQQMSNMVA (167 aa)). Residues 238–243 (NAGKST), 257–263 (SHQPGTT), and 282–285 (DTAG) each bind GTP. Serine 242 and threonine 263 together coordinate Mg(2+). Lysine 473 provides a ligand contact to (6S)-5-formyl-5,6,7,8-tetrahydrofolate.

This sequence belongs to the TRAFAC class TrmE-Era-EngA-EngB-Septin-like GTPase superfamily. TrmE GTPase family. As to quaternary structure, homodimer. Heterotetramer of two MnmE and two MnmG subunits. Requires K(+) as cofactor.

Its subcellular location is the cytoplasm. In terms of biological role, exhibits a very high intrinsic GTPase hydrolysis rate. Involved in the addition of a carboxymethylaminomethyl (cmnm) group at the wobble position (U34) of certain tRNAs, forming tRNA-cmnm(5)s(2)U34. In Chlorobium chlorochromatii (strain CaD3), this protein is tRNA modification GTPase MnmE.